We begin with the raw amino-acid sequence, 1006 residues long: DNA polymerase (1006 aa).

This sequence belongs to the DNA polymerase type-B family. In terms of assembly, interacts with OPG148/A20. Component of the Uracil-DNA glycosylase(UDG)-OPG148/A20-polymerase complex; OPG148/A20 and OPG116/UDG form a heterodimeric processivity factor that associates with OPG071/E9 to form the processive polymerase holoenzyme.

It carries out the reaction DNA(n) + a 2'-deoxyribonucleoside 5'-triphosphate = DNA(n+1) + diphosphate. Functionally, catalyzes DNA synthesis. Acquires processivity by associating with a heterodimeric processivity factor comprised of the viral OPG148/A20 and OPG116/D4 proteins, thereby forming the DNA polymerase holoenzyme. Displays 3'- to 5' exonuclease activity. Might participate in viral DNA recombination. Does not perform OPG116/D4synthesis across an abasic site. In Bos taurus (Bovine), this protein is DNA polymerase (OPG071).